The following is a 234-amino-acid chain: Sugar fermentation stimulation protein homolog (234 aa).

The protein belongs to the SfsA family.

The chain is Sugar fermentation stimulation protein homolog from Shewanella frigidimarina (strain NCIMB 400).